The sequence spans 401 residues: Nicotinate phosphoribosyltransferase (401 aa).

His221 bears the Phosphohistidine; by autocatalysis mark.

Belongs to the NAPRTase family. In terms of processing, transiently phosphorylated on a His residue during the reaction cycle. Phosphorylation strongly increases the affinity for substrates and increases the rate of nicotinate D-ribonucleotide production. Dephosphorylation regenerates the low-affinity form of the enzyme, leading to product release.

It catalyses the reaction nicotinate + 5-phospho-alpha-D-ribose 1-diphosphate + ATP + H2O = nicotinate beta-D-ribonucleotide + ADP + phosphate + diphosphate. The protein operates within cofactor biosynthesis; NAD(+) biosynthesis; nicotinate D-ribonucleotide from nicotinate: step 1/1. In terms of biological role, catalyzes the synthesis of beta-nicotinate D-ribonucleotide from nicotinate and 5-phospho-D-ribose 1-phosphate at the expense of ATP. In Erwinia tasmaniensis (strain DSM 17950 / CFBP 7177 / CIP 109463 / NCPPB 4357 / Et1/99), this protein is Nicotinate phosphoribosyltransferase.